The sequence spans 271 residues: Non-homologous end joining protein Ku (271 aa).

The Ku domain maps to 12-194 (KLSLVTCPVV…DQKPVPELLS (183 aa)). Positions 225–249 (EAKKTPPAKKTKAEEKTGKGSAESN) are disordered.

It belongs to the prokaryotic Ku family. Homodimer. Interacts with LigD.

Its function is as follows. With LigD forms a non-homologous end joining (NHEJ) DNA repair enzyme, which repairs dsDNA breaks with reduced fidelity. Binds linear dsDNA with 5'- and 3'- overhangs but not closed circular dsDNA nor ssDNA. Recruits and stimulates the ligase activity of LigD. The sequence is that of Non-homologous end joining protein Ku from Methylocella silvestris (strain DSM 15510 / CIP 108128 / LMG 27833 / NCIMB 13906 / BL2).